The chain runs to 790 residues: MNQPRPRYVVDRAAYSLSLFDDEFEKKDRAYPVGEKLRNTFRCSSAKFKAFVFGLLPVLSWLPKYKIKDYIIPDLLGGLSGGCIQVPQGMAFALLANLPAVNGLYSSFFPLLTYFFLGGIHQMVPGTFAVISILVGNICLQLAPESKFQIFNNVTNETYVDTAAMEAERLHVSATLACLTAVIQMALGFMQFGFVAIYLSESFIRGFMTAAGLQILISVLKYIFGLTIPSYTGPGSIVFTFIDICKNLPHTNIASLIFALVSGVFLVLVKELNARYMHKIHFPIPTEMIVVVVATAISGSCKMPKKYHMQIVGEIRQGFPTPVAPMVSQWKGMVGTAFSLAIVGYVINLAMGRTLASKHGYDVDSNQEMIALGCSNFFGSFFKIHVICCALSVTLAVDGAGGKSQVASLCVSLVVMITMLVLGSYLYPLPKAVLGALIAVNLKNSLKQLTDPYYLWRKSKLDCCVWVVSFLSSFFLSLPYGVAVGVAFSILVVIFQTQFRNGSTLAQVMDTDIYVNPKTYNRAQEIAGVKIVTYCSPLYLANSEIFRQKVIAKTGMDPQKVLLAKQKYLRKQEKRTAIPTQQRKSLFMKTKTVSLQELQQDFESAPSTDPNNNQAPAAEAHISYITFSPDASTAAACELPASTRSPQEASDTLASVPPFVTFHTLILDMSGVSFVDLMGIKALAKLSSTYEKIGVQIFLVNIHAQVYNDISHGGVFEDGCVQRSHVFPSIHDAVLFAQANAREAPDRNFHGAPGDTEFSLYDSEEEGPSYWDLEQEMFGTMFHTETLTAL.

The Cytoplasmic segment spans residues 1–70 (MNQPRPRYVV…WLPKYKIKDY (70 aa)). The helical transmembrane segment at 71–96 (IIPDLLGGLSGGCIQVPQGMAFALLA) threads the bilayer. The Extracellular segment spans residues 97 to 100 (NLPA). The helical transmembrane segment at 101–109 (VNGLYSSFF) threads the bilayer. Residues 110-129 (PLLTYFFLGGIHQMVPGTFA) lie on the Cytoplasmic side of the membrane. Residues 130-142 (VISILVGNICLQL) form a helical membrane-spanning segment. Topologically, residues 143-162 (APESKFQIFNNVTNETYVDT) are extracellular. The chain crosses the membrane as a helical span at residues 163-191 (AAMEAERLHVSATLACLTAVIQMALGFMQ). Topologically, residues 192 to 201 (FGFVAIYLSE) are cytoplasmic. Residues 202-224 (SFIRGFMTAAGLQILISVLKYIF) form a helical membrane-spanning segment. The Extracellular portion of the chain corresponds to 225-237 (GLTIPSYTGPGSI). The helical intramembrane region spans 238–246 (VFTFIDICK). Residues 247–254 (NLPHTNIA) are Extracellular-facing. Residues 255–275 (SLIFALVSGVFLVLVKELNAR) form a helical membrane-spanning segment. Topologically, residues 276-286 (YMHKIHFPIPT) are cytoplasmic. Residues 287–299 (EMIVVVVATAISG) form a helical membrane-spanning segment. Over 300-334 (SCKMPKKYHMQIVGEIRQGFPTPVAPMVSQWKGMV) the chain is Extracellular. The chain crosses the membrane as a helical span at residues 335-358 (GTAFSLAIVGYVINLAMGRTLASK). The Cytoplasmic portion of the chain corresponds to 359-365 (HGYDVDS). The chain crosses the membrane as a helical span at residues 366-379 (NQEMIALGCSNFFG). At 380–390 (SFFKIHVICCA) the chain is on the extracellular side. Residues 391 to 400 (LSVTLAVDGA) form a helical membrane-spanning segment. The Cytoplasmic segment spans residues 401-405 (GGKSQ). Residues 406-419 (VASLCVSLVVMITM) traverse the membrane as a helical segment. At 420–431 (LVLGSYLYPLPK) the chain is on the extracellular side. A helical transmembrane segment spans residues 432–457 (AVLGALIAVNLKNSLKQLTDPYYLWR). At 458–461 (KSKL) the chain is on the cytoplasmic side. The chain crosses the membrane as a helical span at residues 462 to 476 (DCCVWVVSFLSSFFL). Topologically, residues 477–479 (SLP) are extracellular. Residues 480–498 (YGVAVGVAFSILVVIFQTQ) form a helical membrane-spanning segment. Residues 499 to 790 (FRNGSTLAQV…MFHTETLTAL (292 aa)) are Cytoplasmic-facing. Residues 519-737 (TYNRAQEIAG…PSIHDAVLFA (219 aa)) enclose the STAS domain.

It belongs to the SLC26A/SulP transporter (TC 2.A.53) family. As to quaternary structure, homodimer. In terms of tissue distribution, expressed in stomach and trachea. Abundantly expressed in the apical domain of the surface epithelial cells and the deep cells in the gastric gland. Also expressed in heart, brain, lung and liver.

It localises to the cell membrane. Its subcellular location is the endomembrane system. It carries out the reaction chloride(in) = chloride(out). The catalysed reaction is hydrogencarbonate(in) + chloride(out) = hydrogencarbonate(out) + chloride(in). With respect to regulation, inhibited by ammonium and thiosulfate. Functionally, ion transporter that can act both as an ion channel and anion exchanger. Mainly acts as a chloride channel, which mediate uncoupled chloride anion transport in an alternate-access mechanism where a saturable binding site is alternately exposed to either one or the other side of the membrane. Also acts as a DIDS- and thiosulfate- sensitive anion exchanger the exchange of chloride for bicarbonate ions across the cell membrane. This is Solute carrier family 26 member 9 from Mus musculus (Mouse).